A 569-amino-acid chain; its full sequence is Putative potassium-transporting ATPase ATP-binding subunit (569 aa).

Transmembrane regions (helical) follow at residues 34–54 and 58–78; these read PVMF…LAMV and IAGS…TVLF. Residue D194 is the 4-aspartylphosphate intermediate of the active site. Residues D231, E235, 264–271, and K282 each bind ATP; that span reads FTAQSRMS. Positions 405 and 409 each coordinate Mg(2+). Helical transmembrane passes span 475–495, 503–523, and 543–563; these read FAII…LNVM, AILS…PLAL, and IYGL…DVLL.

The protein belongs to the cation transport ATPase (P-type) (TC 3.A.3) family. Type IA subfamily. The system is composed of three essential subunits: KdpA, KdpB and KdpC.

It localises to the cell inner membrane. The catalysed reaction is K(+)(out) + ATP + H2O = K(+)(in) + ADP + phosphate + H(+). Functionally, part of the high-affinity ATP-driven potassium transport (or Kdp) system, which catalyzes the hydrolysis of ATP coupled with the electrogenic transport of potassium into the cytoplasm. This subunit is responsible for energy coupling to the transport system and for the release of the potassium ions to the cytoplasm. The sequence is that of Putative potassium-transporting ATPase ATP-binding subunit from Salmonella typhi.